The following is an 87-amino-acid chain: Candoxin (87 aa).

Residues 1-21 (MKTLLLTLVVVTIVCLDLGYT) form the signal peptide. 5 disulfides stabilise this stretch: Cys24–Cys47, Cys27–Cys32, Cys40–Cys64, Cys68–Cys80, and Cys81–Cys86.

Expressed by the venom gland.

It localises to the secreted. Its function is as follows. Binds and inhibits muscular and neuronal nicotinic acetylcholine receptors (nAChR). Is a reversible antagonist of muscle nAChR (alpha-1-beta-1-delta-epsilon/CHRNA1-CHRNB1-CHRND-CHRNE) (IC(50)=10 nM) and a potent and poorly reversible antagonist of the neuronal alpha-7/CHRNA7 nAChR (IC(50)=50 nM). May exhibit differential affinities for the two binding sites on the muscle nAChR. This Bungarus candidus (Malayan krait) protein is Candoxin.